A 465-amino-acid polypeptide reads, in one-letter code: MEKNYIFENSIYKDENENDNEDDQYYNNNSSNNDEIINEEYLIKKREKIETLFLYQNFQIVITELINLLYKLYSNNNNNNNNNSPLLSSIFNTNNEENNENPTTTTISLSNKIFESFSKCYHSCQNDTNCQCRWIMELLIQSLYEVGKPSDALKLVNRFYQDGISNTPINILILSIHLLVYLKSYNESKVIIIEALKRNRNEFKSDQYEQLIELLIFHVMFRMNEINESISLLQNDSYLSDWKKNGFIKALYEMVQIREFEEKNQRELQLKRETEKLQQQNQQQQQQQLEKQLINEQQQHQQQQELNNSSQPQQEQEQLPIKTQSNISIIKDIINESIHEILSIRDLKSLKLAINRVLFAVKRVSNSRNNNNNNNNNNNNLINTKTLKQQQQQKLNSNNKRQFGIKNVQQQQQQPYRNSQQYQQYRQNNRSILNSNNNNNNNNSSTANWGGLKQLLSNTFSFNRV.

Positions 1 to 15 (MEKNYIFENSIYKDE) are enriched in basic and acidic residues. Disordered stretches follow at residues 1–31 (MEKN…NNSS) and 288–320 (QLEK…EQLP).

This is an uncharacterized protein from Dictyostelium discoideum (Social amoeba).